Here is a 784-residue protein sequence, read N- to C-terminus: Endonuclease MutS2 (784 aa).

Residue G335 to T342 participates in ATP binding. The disordered stretch occupies residues E527–E546. The Smr domain occupies L709–K784.

Belongs to the DNA mismatch repair MutS family. MutS2 subfamily. As to quaternary structure, homodimer. Binds to stalled ribosomes, contacting rRNA.

Endonuclease that is involved in the suppression of homologous recombination and thus may have a key role in the control of bacterial genetic diversity. Functionally, acts as a ribosome collision sensor, splitting the ribosome into its 2 subunits. Detects stalled/collided 70S ribosomes which it binds and splits by an ATP-hydrolysis driven conformational change. Acts upstream of the ribosome quality control system (RQC), a ribosome-associated complex that mediates the extraction of incompletely synthesized nascent chains from stalled ribosomes and their subsequent degradation. Probably generates substrates for RQC. This Geobacillus thermodenitrificans (strain NG80-2) protein is Endonuclease MutS2.